Reading from the N-terminus, the 353-residue chain is Alanine racemase (353 aa).

Lysine 34 serves as the catalytic Proton acceptor; specific for D-alanine. Residue lysine 34 is modified to N6-(pyridoxal phosphate)lysine. Arginine 128 provides a ligand contact to substrate. The active-site Proton acceptor; specific for L-alanine is the tyrosine 251. Substrate is bound at residue methionine 299.

The protein belongs to the alanine racemase family. Requires pyridoxal 5'-phosphate as cofactor.

The catalysed reaction is L-alanine = D-alanine. It participates in amino-acid biosynthesis; D-alanine biosynthesis; D-alanine from L-alanine: step 1/1. In terms of biological role, catalyzes the interconversion of L-alanine and D-alanine. May also act on other amino acids. The polypeptide is Alanine racemase (alr) (Alcanivorax borkumensis (strain ATCC 700651 / DSM 11573 / NCIMB 13689 / SK2)).